The sequence spans 174 residues: Ribosome maturation factor RimP (174 aa).

This sequence belongs to the RimP family.

Its subcellular location is the cytoplasm. Required for maturation of 30S ribosomal subunits. This Acinetobacter baylyi (strain ATCC 33305 / BD413 / ADP1) protein is Ribosome maturation factor RimP.